Here is a 524-residue protein sequence, read N- to C-terminus: mRNA cap guanine-N(7) methyltransferase (524 aa).

The interval 1 to 155 (MSDKEAGVAS…DKKRAHDEAE (155 aa)) is disordered. Basic and acidic residues predominate over residues 19-40 (NKDEVDVKNTEEHSKQESKSDI). Positions 68-77 (NNKVISSVYN) are enriched in polar residues. Residues 90-99 (KTTDKYDKYG) show a composition bias toward basic and acidic residues. The segment covering 100–112 (SRSTPIATPTAPV) has biased composition (polar residues). Residues 214-522 (SPIYKLRNFN…FYIGFVFEKL (309 aa)) enclose the mRNA cap 0 methyltransferase domain. 223 to 224 (NN) lines the mRNA pocket. Residues K227, C251, D273, D319, Q349, and Y354 each contribute to the S-adenosyl-L-methionine site.

Belongs to the class I-like SAM-binding methyltransferase superfamily. mRNA cap 0 methyltransferase family.

Its subcellular location is the nucleus. It carries out the reaction a 5'-end (5'-triphosphoguanosine)-ribonucleoside in mRNA + S-adenosyl-L-methionine = a 5'-end (N(7)-methyl 5'-triphosphoguanosine)-ribonucleoside in mRNA + S-adenosyl-L-homocysteine. Responsible for methylating the 5'-cap structure of mRNAs. The sequence is that of mRNA cap guanine-N(7) methyltransferase (ABD1) from Debaryomyces hansenii (strain ATCC 36239 / CBS 767 / BCRC 21394 / JCM 1990 / NBRC 0083 / IGC 2968) (Yeast).